A 57-amino-acid chain; its full sequence is MAVPKKRTSMSKKHIRRNLWKKKGSLAAVKAFSLAQSISTGQSKSFFVAQKKVLEKS.

The protein belongs to the bacterial ribosomal protein bL32 family.

Its subcellular location is the plastid. The protein localises to the chloroplast. In Phalaenopsis aphrodite subsp. formosana (Moth orchid), this protein is Large ribosomal subunit protein bL32c.